Here is a 394-residue protein sequence, read N- to C-terminus: Putative FNIP repeat-containing protein R636 (394 aa).

3 FNIP repeats span residues 126–167 (FNKS…FSVY), 168–207 (FDQP…LYFG), and 210–250 (FNQP…IFEA).

The chain is Putative FNIP repeat-containing protein R636 from Acanthamoeba polyphaga mimivirus (APMV).